Reading from the N-terminus, the 396-residue chain is DNA polymerase IV (396 aa).

Residues 6–186 (IIHVDMDAFY…LPISRLWGVG (181 aa)) form the UmuC domain. Residues Asp10 and Asp104 each coordinate Mg(2+). The active site involves Glu105.

Belongs to the DNA polymerase type-Y family. As to quaternary structure, monomer. Mg(2+) serves as cofactor.

The protein resides in the cytoplasm. The catalysed reaction is DNA(n) + a 2'-deoxyribonucleoside 5'-triphosphate = DNA(n+1) + diphosphate. Its function is as follows. Poorly processive, error-prone DNA polymerase involved in untargeted mutagenesis. Copies undamaged DNA at stalled replication forks, which arise in vivo from mismatched or misaligned primer ends. These misaligned primers can be extended by PolIV. Exhibits no 3'-5' exonuclease (proofreading) activity. May be involved in translesional synthesis, in conjunction with the beta clamp from PolIII. The polypeptide is DNA polymerase IV (Desulfatibacillum aliphaticivorans).